A 110-amino-acid chain; its full sequence is NADH-quinone oxidoreductase subunit K (110 aa).

Transmembrane regions (helical) follow at residues 13-33, 41-61, and 73-93; these read LNHYLILSSLVFTIGMFGLFM, ILMSIELMLLAVNINFVAFSI, and IIILTVAAAETSIGLAILLIY.

Belongs to the complex I subunit 4L family. As to quaternary structure, NDH-1 is composed of 14 different subunits. Subunits NuoA, H, J, K, L, M, N constitute the membrane sector of the complex.

Its subcellular location is the cell inner membrane. It carries out the reaction a quinone + NADH + 5 H(+)(in) = a quinol + NAD(+) + 4 H(+)(out). Functionally, NDH-1 shuttles electrons from NADH, via FMN and iron-sulfur (Fe-S) centers, to quinones in the respiratory chain. The immediate electron acceptor for the enzyme in this species is believed to be ubiquinone. Couples the redox reaction to proton translocation (for every two electrons transferred, four hydrogen ions are translocated across the cytoplasmic membrane), and thus conserves the redox energy in a proton gradient. The chain is NADH-quinone oxidoreductase subunit K from Rickettsia felis (strain ATCC VR-1525 / URRWXCal2) (Rickettsia azadi).